The primary structure comprises 335 residues: Methionine import ATP-binding protein MetN 2 (335 aa).

One can recognise an ABC transporter domain in the interval 2 to 242; it reads IEFHDVHKTY…PQHPTTRRFV (241 aa). Residue 38 to 45 participates in ATP binding; it reads GHSGAGKS.

The protein belongs to the ABC transporter superfamily. Methionine importer (TC 3.A.1.24) family. As to quaternary structure, the complex is composed of two ATP-binding proteins (MetN), two transmembrane proteins (MetI) and a solute-binding protein (MetQ).

The protein localises to the cell inner membrane. The enzyme catalyses L-methionine(out) + ATP + H2O = L-methionine(in) + ADP + phosphate + H(+). It catalyses the reaction D-methionine(out) + ATP + H2O = D-methionine(in) + ADP + phosphate + H(+). Part of the ABC transporter complex MetNIQ involved in methionine import. Responsible for energy coupling to the transport system. The protein is Methionine import ATP-binding protein MetN 2 of Pseudomonas aeruginosa (strain UCBPP-PA14).